Reading from the N-terminus, the 117-residue chain is Large ribosomal subunit protein bL19 (117 aa).

It belongs to the bacterial ribosomal protein bL19 family.

Its function is as follows. This protein is located at the 30S-50S ribosomal subunit interface and may play a role in the structure and function of the aminoacyl-tRNA binding site. The protein is Large ribosomal subunit protein bL19 of Desulfosudis oleivorans (strain DSM 6200 / JCM 39069 / Hxd3) (Desulfococcus oleovorans).